The chain runs to 121 residues: MQYVYIFIGGALGALLRYLISFLNTDGGFPIGTLVANLTGAFIMGLLTALTIAFFSNHPTLKKAITTGFLGALTTFSTFQLELIHMFDHQQFITLLLYAITSYVFGILLCYVGIKLGGGLS.

4 helical membrane-spanning segments follow: residues 3–23, 35–55, 64–84, and 92–112; these read YVYIFIGGALGALLRYLISFL, VANLTGAFIMGLLTALTIAFF, AITTGFLGALTTFSTFQLELI, and FITLLLYAITSYVFGILLCYV. 2 residues coordinate Na(+): Gly71 and Thr74.

The protein belongs to the fluoride channel Fluc/FEX (TC 1.A.43) family.

Its subcellular location is the cell membrane. It catalyses the reaction fluoride(in) = fluoride(out). Na(+) is not transported, but it plays an essential structural role and its presence is essential for fluoride channel function. Its function is as follows. Fluoride-specific ion channel. Important for reducing fluoride concentration in the cell, thus reducing its toxicity. This chain is Fluoride-specific ion channel FluC 1, found in Staphylococcus aureus (strain bovine RF122 / ET3-1).